The following is an 874-amino-acid chain: Alanine--tRNA ligase (874 aa).

Residues histidine 562, histidine 566, cysteine 665, and histidine 669 each coordinate Zn(2+).

This sequence belongs to the class-II aminoacyl-tRNA synthetase family. Zn(2+) is required as a cofactor.

The protein localises to the cytoplasm. It carries out the reaction tRNA(Ala) + L-alanine + ATP = L-alanyl-tRNA(Ala) + AMP + diphosphate. Catalyzes the attachment of alanine to tRNA(Ala) in a two-step reaction: alanine is first activated by ATP to form Ala-AMP and then transferred to the acceptor end of tRNA(Ala). Also edits incorrectly charged Ser-tRNA(Ala) and Gly-tRNA(Ala) via its editing domain. This chain is Alanine--tRNA ligase, found in Pseudomonas fluorescens (strain Pf0-1).